Here is a 237-residue protein sequence, read N- to C-terminus: Ras-related protein Rab-23 (237 aa).

Position 19 (alanine 19) interacts with GDP. Residues valine 20, glycine 21, lysine 22, serine 23, and serine 24 each contribute to the GTP site. Glycine 21, lysine 22, serine 23, serine 24, and aspartate 37 together coordinate GDP. Residue serine 23 coordinates Mg(2+). The Switch 1 signature appears at 28–46 (RYCKGIFTKDYKKTIGVDF). A GTP-binding site is contributed by tyrosine 38. Position 40 (lysine 40) interacts with GDP. Threonine 41 is a binding site for GTP. Mg(2+) contacts are provided by threonine 41 and aspartate 64. Residues 65–84 (TAGQEEFDAITKAYYRGAQA) carry the Switch 2 motif. The GTP site is built by glycine 67, asparagine 121, lysine 122, aspartate 124, serine 151, valine 152, and lysine 153. The GDP site is built by asparagine 121, lysine 122, and aspartate 124. Residues valine 152 and lysine 153 each contribute to the GDP site. Phosphoserine occurs at positions 186 and 187. Residues 204-237 (QNSSSLNGGDVINLRPNKQRTKRTRNPFSSCSVP) are disordered. Cysteine 234 carries the post-translational modification Cysteine methyl ester. Cysteine 234 is lipidated: S-geranylgeranyl cysteine. A propeptide spans 235-237 (SVP) (removed in mature form).

This sequence belongs to the small GTPase superfamily. Rab family. Interacts with SUFU. The cofactor is Mg(2+). Detected in brain neurons (at protein level). Forebrain and midbrain.

Its subcellular location is the cell membrane. It localises to the cytoplasm. The protein localises to the endosome membrane. The protein resides in the cytoplasmic vesicle. It is found in the autophagosome. Its subcellular location is the phagosome. It localises to the phagosome membrane. The enzyme catalyses GTP + H2O = GDP + phosphate + H(+). Regulated by guanine nucleotide exchange factors (GEFs) which promote the exchange of bound GDP for free GTP. Regulated by GTPase activating proteins (GAPs) which increase the GTP hydrolysis activity. Inhibited by GDP dissociation inhibitors (GDIs). Functionally, the small GTPases Rab are key regulators of intracellular membrane trafficking, from the formation of transport vesicles to their fusion with membranes. Rabs cycle between an inactive GDP-bound form and an active GTP-bound form that is able to recruit to membranes different set of downstream effectors directly responsible for vesicle formation, movement, tethering and fusion. Plays a role in autophagic vacuole assembly, and mediates defense against pathogens, such as S.aureus, by promoting their capture by autophagosomes that then merge with lysosomes. Together with SUFU, prevents nuclear import of GLI1, and thereby inhibits GLI1 transcription factor activity. Regulates GLI1 in differentiating chondrocytes. Likewise, regulates GLI3 proteolytic processing and modulates GLI2 and GLI3 transcription factor activity. The chain is Ras-related protein Rab-23 from Mus musculus (Mouse).